Reading from the N-terminus, the 108-residue chain is UPF0060 membrane protein sll0793 (108 aa).

4 consecutive transmembrane segments (helical) span residues 7–27 (LYFVMAGLCEIGGGYLVWLWI), 32–52 (SVWLALVRAILLTVYGFVATL), 64–84 (YGGIFIILSIIWGWQVDNVVV), and 86–106 (RLDWLGAAIALVGVLVMMYAN).

This sequence belongs to the UPF0060 family.

Its subcellular location is the cell inner membrane. This is UPF0060 membrane protein sll0793 from Synechocystis sp. (strain ATCC 27184 / PCC 6803 / Kazusa).